The sequence spans 314 residues: MPSTTNTAAANVIEKKPVSFSNILLGACLNLSEVTTLGQPLEVVKTTMAANRNFTFLESVKHVWSRGGILGYYQGLIPWAWIEASTKGAVLLFVSAEAEYRFKSLGLNNFASGILGGVTGGVTQAYLTMGFCTCMKTVEITRHKSASAGGVPQSSWSVFKNIYKKEGIRGINKGVNAVAIRQMTNWGSRFGLSRLVEDGIRKITGKTNKDDKLNPFEKIGASALGGGLSAWNQPIEVIRVEMQSKKEDPNRPKNLTVGKTFKYIYQSNGLKGLYRGVTPRIGLGIWQTVFMVGFGDMAKEFVARMTGETPVAKH.

Solcar repeat units follow at residues 18–100 (VSFS…EAEY), 107–199 (LNNF…VEDG), and 217–301 (EKIG…AKEF). 5 helical membrane passes run 23–44 (ILLG…LEVV), 77–97 (IPWA…VSAE), 111–127 (ASGI…QAYL), 178–198 (VAIR…LVED), and 218–238 (KIGA…IEVI). Residues 246–259 (KEDPNRPKNLTVGK) mediate DNA binding. The helical transmembrane segment at 273–294 (LYRGVTPRIGLGIWQTVFMVGF) threads the bilayer.

It belongs to the mitochondrial carrier (TC 2.A.29) family.

The protein localises to the mitochondrion inner membrane. It is found in the mitochondrion matrix. It localises to the mitochondrion nucleoid. Its activity is regulated as follows. Strongly inhibited by mersalyl, p-chloromercuribenzenesulfonate, mercuric chloride, N-ethylmaleimide, pyridoxal 5'-phosphate, bathophenanthroline, and tannic acid. Partially inhibited by alpha-cyanocinnamate and bromescol purple. Weakly inhibited by butylmalonate and phenylsuccinate. Not inhibited by 1,2,3-benzenetricarboxylate or carboxyatractyloside. Its function is as follows. Mitochondrial antiporter which catalyzes the transport of citrate and oxoglutarate across the membrane. Also shows specificity for oxaloacetate, and to a lesser extent succinate and fumarate. Transports isocitrate, cis-aconitate and L-malate with very low efficiency. Does not show uniporter activity. Helps to maintain normal citrate levels and NADPH/NADP(+) ratios under conditions of oxidative stress. In addition, associates with the mitochondrial nucleoid and binds DNA in vitro, although the relevance of these data in vivo is unclear. The polypeptide is Citrate/oxoglutarate carrier protein (YHM2) (Saccharomyces cerevisiae (strain ATCC 204508 / S288c) (Baker's yeast)).